The chain runs to 541 residues: Probable malate:quinone oxidoreductase (541 aa).

Residues Ala520 to Leu541 form a disordered region.

This sequence belongs to the MQO family. FAD serves as cofactor.

It carries out the reaction (S)-malate + a quinone = a quinol + oxaloacetate. It participates in carbohydrate metabolism; tricarboxylic acid cycle; oxaloacetate from (S)-malate (quinone route): step 1/1. This Ralstonia nicotianae (strain ATCC BAA-1114 / GMI1000) (Ralstonia solanacearum) protein is Probable malate:quinone oxidoreductase.